A 620-amino-acid polypeptide reads, in one-letter code: Translation initiation factor IF-2 (620 aa).

The region spanning 126–295 (KRPPIVTIMG…IVTAEIMELK (170 aa)) is the tr-type G domain. Residues 135–142 (GHVDHGKT) are G1. Position 135 to 142 (135 to 142 (GHVDHGKT)) interacts with GTP. Residues 160–164 (NITQS) form a G2 region. The segment at 181 to 184 (DTPG) is G3. GTP is bound by residues 181–185 (DTPGH) and 235–238 (NKMD). Residues 235 to 238 (NKMD) are G4. The G5 stretch occupies residues 271–273 (SAL).

It belongs to the TRAFAC class translation factor GTPase superfamily. Classic translation factor GTPase family. IF-2 subfamily.

The protein localises to the cytoplasm. In terms of biological role, one of the essential components for the initiation of protein synthesis. Protects formylmethionyl-tRNA from spontaneous hydrolysis and promotes its binding to the 30S ribosomal subunits. Also involved in the hydrolysis of GTP during the formation of the 70S ribosomal complex. This chain is Translation initiation factor IF-2, found in Malacoplasma penetrans (strain HF-2) (Mycoplasma penetrans).